The primary structure comprises 188 residues: Ribosomal RNA small subunit methyltransferase G (188 aa).

S-adenosyl-L-methionine contacts are provided by residues G69, F74, 119-120 (VQ), and R134.

It belongs to the methyltransferase superfamily. RNA methyltransferase RsmG family.

The protein localises to the cytoplasm. It catalyses the reaction guanosine(527) in 16S rRNA + S-adenosyl-L-methionine = N(7)-methylguanosine(527) in 16S rRNA + S-adenosyl-L-homocysteine. In terms of biological role, specifically methylates the N7 position of guanine in position 527 of 16S rRNA. This Campylobacter jejuni subsp. jejuni serotype O:23/36 (strain 81-176) protein is Ribosomal RNA small subunit methyltransferase G.